The following is a 416-amino-acid chain: Homogentisate 1,2-dioxygenase (416 aa).

The Proton acceptor role is filled by His-275. His-318 and Glu-324 together coordinate Fe cation. Homogentisate contacts are provided by Tyr-333 and His-354. His-354 contributes to the Fe cation binding site.

The protein belongs to the homogentisate dioxygenase family. Hexamer; dimer of trimers. Requires Fe cation as cofactor.

It carries out the reaction homogentisate + O2 = 4-maleylacetoacetate + H(+). It participates in amino-acid degradation; L-phenylalanine degradation; acetoacetate and fumarate from L-phenylalanine: step 4/6. Functionally, involved in the catabolism of homogentisate (2,5-dihydroxyphenylacetate or 2,5-OH-PhAc), a central intermediate in the degradation of phenylalanine and tyrosine. Catalyzes the oxidative ring cleavage of the aromatic ring of homogentisate to yield maleylacetoacetate. This chain is Homogentisate 1,2-dioxygenase, found in Legionella pneumophila (strain Lens).